The following is a 664-amino-acid chain: Type IV inositol polyphosphate 5-phosphatase 3 (664 aa).

The disordered stretch occupies residues 35–76; sequence GRDPEYGADTDNESENEDAREDNDDSSSDEEGGSGSRGRESK. Residues 40 to 66 show a composition bias toward acidic residues; that stretch reads YGADTDNESENEDAREDNDDSSSDEEG. Catalytic regions lie at residues 514–529 and 592–607; these read ERII…LSSS and PKRT…SYGK.

Belongs to the inositol polyphosphate 5-phosphatase family.

It carries out the reaction a 1,2-diacyl-sn-glycero-3-phospho-(1D-myo-inositol-4,5-bisphosphate) + H2O = a 1,2-diacyl-sn-glycero-3-phospho-(1D-myo-inositol 4-phosphate) + phosphate. It catalyses the reaction a 1,2-diacyl-sn-glycero-3-phospho-(1D-myo-inositol-3,4,5-trisphosphate) + H2O = a 1,2-diacyl-sn-glycero-3-phospho-(1D-myo-inositol-3,4-bisphosphate) + phosphate. Has phosphatase activity toward PtdIns(4,5)P2 and PtdIns(3,4,5)P3. This is Type IV inositol polyphosphate 5-phosphatase 3 from Arabidopsis thaliana (Mouse-ear cress).